A 49-amino-acid polypeptide reads, in one-letter code: Disintegrin ocellatin (49 aa).

A Disintegrin domain is found at 1 to 47; sequence DCESGPCCDNCKFLKEGTICKMARGDNMHHYCNGKTCDCPRNPYKGE. Cystine bridges form between cysteine 2–cysteine 11, cysteine 7–cysteine 32, cysteine 8–cysteine 37, and cysteine 20–cysteine 39. A Cell attachment site motif is present at residues 24 to 26; that stretch reads RGD.

It belongs to the venom metalloproteinase (M12B) family. P-II subfamily. P-IIa sub-subfamily. In terms of assembly, monomer. In terms of tissue distribution, expressed by the venom gland.

Its subcellular location is the secreted. Inhibits ADP-induced human platelet aggregation. This Echis ocellatus (Ocellated saw-scaled viper) protein is Disintegrin ocellatin.